We begin with the raw amino-acid sequence, 618 residues long: F-box/LRR-repeat protein At3g58940 (618 aa).

The F-box domain maps to 1–47; the sequence is MDRVSNLPEEVRCHILSFLPTKHAALTSVLSKSWLNLWKFETNLDID. 6 LRR repeats span residues 147–176, 196–223, 224–249, 282–313, 314–339, and 354–379; these read LKLRSEHCVNWWHWDIGASLPNLKSLNIDS, EVHMANMEWRELDETMSSASLTKLSIHG, TGVEEFEHPKSISIDTPNLLYLNYSD, TLYLTEDTLEVLTMCCESMPVFNNLKTLGLKS, DEGRGWQAVPALLRNCPHLEFLIIEG, and CISREDKGRSLISCPVKKLEVRGFRG. The interval 587 to 618 is disordered; that stretch reads ATDSERAETSSNQEMTELGQATATYFPPREGE. A compositionally biased stretch (polar residues) spans 595–609; the sequence is TSSNQEMTELGQATA.

This is F-box/LRR-repeat protein At3g58940 from Arabidopsis thaliana (Mouse-ear cress).